The chain runs to 470 residues: Chromosomal replication initiator protein DnaA (470 aa).

Residues 1 to 68 (MENFWSLCLG…SALAEEVLST (68 aa)) are domain I, interacts with DnaA modulators. Positions 68–133 (TPVQIELALY…KKPKTLTETS (66 aa)) are domain II. The tract at residues 134–350 (GLNPAFRFDN…GALNRIIAMA (217 aa)) is domain III, AAA+ region. Gly178, Gly180, Lys181, and Thr182 together coordinate ATP. Residues 351-470 (NFTGHAIDVS…IAVLIQVIRD (120 aa)) are domain IV, binds dsDNA.

The protein belongs to the DnaA family. As to quaternary structure, oligomerizes as a right-handed, spiral filament on DNA at oriC.

It localises to the cytoplasm. Its function is as follows. Plays an essential role in the initiation and regulation of chromosomal replication. ATP-DnaA binds to the origin of replication (oriC) to initiate formation of the DNA replication initiation complex once per cell cycle. Binds the DnaA box (a 9 base pair repeat at the origin) and separates the double-stranded (ds)DNA. Forms a right-handed helical filament on oriC DNA; dsDNA binds to the exterior of the filament while single-stranded (ss)DNA is stabiized in the filament's interior. The ATP-DnaA-oriC complex binds and stabilizes one strand of the AT-rich DNA unwinding element (DUE), permitting loading of DNA polymerase. After initiation quickly degrades to an ADP-DnaA complex that is not apt for DNA replication. Binds acidic phospholipids. The sequence is that of Chromosomal replication initiator protein DnaA from Methylobacillus flagellatus (strain ATCC 51484 / DSM 6875 / VKM B-1610 / KT).